Here is a 78-residue protein sequence, read N- to C-terminus: Acyl carrier protein (78 aa).

The 76-residue stretch at 2–77 (SDILERVRKI…DAVKFITEKT (76 aa)) folds into the Carrier domain. S37 is subject to O-(pantetheine 4'-phosphoryl)serine.

The protein belongs to the acyl carrier protein (ACP) family. In terms of processing, 4'-phosphopantetheine is transferred from CoA to a specific serine of apo-ACP by AcpS. This modification is essential for activity because fatty acids are bound in thioester linkage to the sulfhydryl of the prosthetic group.

The protein localises to the cytoplasm. The protein operates within lipid metabolism; fatty acid biosynthesis. Carrier of the growing fatty acid chain in fatty acid biosynthesis. The protein is Acyl carrier protein of Caulobacter vibrioides (strain ATCC 19089 / CIP 103742 / CB 15) (Caulobacter crescentus).